A 1011-amino-acid polypeptide reads, in one-letter code: DNA-directed RNA polymerase 2, chloroplastic/mitochondrial (1011 aa).

Residues 307–326 (KGDDNEESGGVENETSMKEQ) are disordered. Residues Asp712, Lys787, and Asp944 contribute to the active site.

Belongs to the phage and mitochondrial RNA polymerase family. Interacts with NIP1 and NIP2.

The protein resides in the plastid. Its subcellular location is the chloroplast. It is found in the mitochondrion. It carries out the reaction RNA(n) + a ribonucleoside 5'-triphosphate = RNA(n+1) + diphosphate. Its function is as follows. DNA-dependent RNA polymerase catalyzes the transcription of DNA into RNA using the four ribonucleoside triphosphates as substrates. This is DNA-directed RNA polymerase 2, chloroplastic/mitochondrial (RPOT2) from Arabidopsis thaliana (Mouse-ear cress).